The primary structure comprises 347 residues: UDP-N-acetylenolpyruvoylglucosamine reductase (347 aa).

The FAD-binding PCMH-type domain maps to 24–195 (FDARARVAAR…VAVTFRLPKA (172 aa)). The active site involves R171. S247 (proton donor) is an active-site residue. Residue E343 is part of the active site.

This sequence belongs to the MurB family. Requires FAD as cofactor.

Its subcellular location is the cytoplasm. The catalysed reaction is UDP-N-acetyl-alpha-D-muramate + NADP(+) = UDP-N-acetyl-3-O-(1-carboxyvinyl)-alpha-D-glucosamine + NADPH + H(+). The protein operates within cell wall biogenesis; peptidoglycan biosynthesis. Its function is as follows. Cell wall formation. The sequence is that of UDP-N-acetylenolpyruvoylglucosamine reductase from Burkholderia pseudomallei (strain 668).